Consider the following 217-residue polypeptide: 3,4-dihydroxy-2-butanone 4-phosphate synthase (217 aa).

D-ribulose 5-phosphate is bound by residues 37-38, D42, 150-154, and E174; these read RE and RGGHT. Residue E38 participates in Mg(2+) binding. H153 contacts Mg(2+).

Belongs to the DHBP synthase family. In terms of assembly, homodimer. Requires Mg(2+) as cofactor. Mn(2+) serves as cofactor.

It catalyses the reaction D-ribulose 5-phosphate = (2S)-2-hydroxy-3-oxobutyl phosphate + formate + H(+). The protein operates within cofactor biosynthesis; riboflavin biosynthesis; 2-hydroxy-3-oxobutyl phosphate from D-ribulose 5-phosphate: step 1/1. In terms of biological role, catalyzes the conversion of D-ribulose 5-phosphate to formate and 3,4-dihydroxy-2-butanone 4-phosphate. In Salmonella heidelberg (strain SL476), this protein is 3,4-dihydroxy-2-butanone 4-phosphate synthase.